A 302-amino-acid chain; its full sequence is UDP-N-acetylenolpyruvoylglucosamine reductase (302 aa).

Residues 31-210 enclose the FAD-binding PCMH-type domain; that stretch reads IGGQTKVYFR…ENEVLELKKK (180 aa). Arg-175 is a catalytic residue. The active-site Proton donor is the Ser-224. Glu-297 is a catalytic residue.

It belongs to the MurB family. It depends on FAD as a cofactor.

Its subcellular location is the cytoplasm. It catalyses the reaction UDP-N-acetyl-alpha-D-muramate + NADP(+) = UDP-N-acetyl-3-O-(1-carboxyvinyl)-alpha-D-glucosamine + NADPH + H(+). Its pathway is cell wall biogenesis; peptidoglycan biosynthesis. In terms of biological role, cell wall formation. The polypeptide is UDP-N-acetylenolpyruvoylglucosamine reductase (Pelagibacter ubique (strain HTCC1062)).